A 249-amino-acid polypeptide reads, in one-letter code: Coproheme decarboxylase (249 aa).

Fe-coproporphyrin III contacts are provided by residues Arg-131, 145–149 (YPMDK), His-172, and Gln-185. Tyr-145 is an active-site residue.

Belongs to the ChdC family. Type 1 subfamily. Fe-coproporphyrin III is required as a cofactor.

The enzyme catalyses Fe-coproporphyrin III + 2 H2O2 + 2 H(+) = heme b + 2 CO2 + 4 H2O. The catalysed reaction is Fe-coproporphyrin III + H2O2 + H(+) = harderoheme III + CO2 + 2 H2O. It catalyses the reaction harderoheme III + H2O2 + H(+) = heme b + CO2 + 2 H2O. It functions in the pathway porphyrin-containing compound metabolism; protoheme biosynthesis. Its function is as follows. Involved in coproporphyrin-dependent heme b biosynthesis. Catalyzes the decarboxylation of Fe-coproporphyrin III (coproheme) to heme b (protoheme IX), the last step of the pathway. The reaction occurs in a stepwise manner with a three-propionate intermediate. The chain is Coproheme decarboxylase from Staphylococcus epidermidis (strain ATCC 12228 / FDA PCI 1200).